The chain runs to 206 residues: MASGKFITFEGIDGAGKTTHLQWFCERLQAKLAAGGRQVVVTREPGGTQLGEKLREILLNQPMDLETEALLMFAARREHLALVIEPALARGDWVVSDRFTDATFAYQGGGRGLPRDKLETLERWVQGGFQPDLTVLFDVAPQVASERRGAVRMPDKFESESDAFFSRTRGEYLRRAEEAPHRFAIVDATQSIPEIRQQLERVLAAL.

11-18 (GIDGAGKT) contributes to the ATP binding site.

Belongs to the thymidylate kinase family.

The enzyme catalyses dTMP + ATP = dTDP + ADP. Its function is as follows. Phosphorylation of dTMP to form dTDP in both de novo and salvage pathways of dTTP synthesis. The protein is Thymidylate kinase of Burkholderia ambifaria (strain MC40-6).